The chain runs to 494 residues: Maintenance of mitochondrial morphology protein 1 (494 aa).

The Lumenal portion of the chain corresponds to 1 to 25; it reads MGDDQSLRSTVAENDISANLSFTQG. A helical membrane pass occupies residues 26-46; sequence FLLGQLSVVLLIGAFIKFFIF. The Cytoplasmic segment spans residues 47–494; that stretch reads GEAPPPPSRG…GTLPGGAAAN (448 aa). Disordered regions lie at residues 53-99, 278-330, and 395-494; these read PSRG…VPSS, PPLH…KSNV, and RTGV…AAAN. Basic residues predominate over residues 57-67; the sequence is LSHRASTHRRS. 2 stretches are compositionally biased toward polar residues: residues 68 to 81 and 88 to 99; these read NSIY…GTSR and STSNVLRPVPSS. One can recognise an SMP-LTD domain in the interval 134–387; sequence QPESLDWFNV…EPRVQVVGLP (254 aa). The segment covering 278-290 has biased composition (pro residues); that stretch reads PPLHTPSPSPSPP. 2 stretches are compositionally biased toward polar residues: residues 300–318 and 406–415; these read THPT…NAQE and TGSNAASRSA. Over residues 425–437 the composition is skewed to basic and acidic residues; it reads RADDIGREPDGLR.

This sequence belongs to the MMM1 family. Homodimer. Component of the ER-mitochondria encounter structure (ERMES) or MDM complex, composed of mmm1, mdm10, mdm12 and mdm34. A mmm1 homodimer associates with one molecule of mdm12 on each side in a pairwise head-to-tail manner, and the SMP-LTD domains of mmm1 and mdm12 generate a continuous hydrophobic tunnel for phospholipid trafficking.

It is found in the endoplasmic reticulum membrane. In terms of biological role, component of the ERMES/MDM complex, which serves as a molecular tether to connect the endoplasmic reticulum (ER) and mitochondria. Components of this complex are involved in the control of mitochondrial shape and protein biogenesis, and function in nonvesicular lipid trafficking between the ER and mitochondria. The mdm12-mmm1 subcomplex functions in the major beta-barrel assembly pathway that is responsible for biogenesis of all outer membrane beta-barrel proteins, and acts in a late step after the SAM complex. The mdm10-mdm12-mmm1 subcomplex further acts in the TOM40-specific pathway after the action of the mdm12-mmm1 complex. Essential for establishing and maintaining the structure of mitochondria and maintenance of mtDNA nucleoids. The polypeptide is Maintenance of mitochondrial morphology protein 1 (Aspergillus oryzae (strain ATCC 42149 / RIB 40) (Yellow koji mold)).